Here is a 437-residue protein sequence, read N- to C-terminus: ATP-dependent protease ATPase subunit HslU (437 aa).

ATP-binding positions include V18, 60 to 65, D250, E315, and R387; that span reads GCGKTE.

Belongs to the ClpX chaperone family. HslU subfamily. In terms of assembly, a double ring-shaped homohexamer of HslV is capped on each side by a ring-shaped HslU homohexamer. The assembly of the HslU/HslV complex is dependent on binding of ATP.

It localises to the cytoplasm. ATPase subunit of a proteasome-like degradation complex; this subunit has chaperone activity. The binding of ATP and its subsequent hydrolysis by HslU are essential for unfolding of protein substrates subsequently hydrolyzed by HslV. HslU recognizes the N-terminal part of its protein substrates and unfolds these before they are guided to HslV for hydrolysis. This Methylobacterium radiotolerans (strain ATCC 27329 / DSM 1819 / JCM 2831 / NBRC 15690 / NCIMB 10815 / 0-1) protein is ATP-dependent protease ATPase subunit HslU.